The chain runs to 134 residues: Profilin-2 (134 aa).

Residues cysteine 13 and cysteine 118 are joined by a disulfide bond. The Involved in PIP2 interaction signature appears at 84–100; that stretch reads AVIRGKKGSGGITIKKT. Threonine 114 is subject to Phosphothreonine.

It belongs to the profilin family. Occurs in many kinds of cells as a complex with monomeric actin in a 1:1 ratio. Post-translationally, phosphorylated by MAP kinases.

It localises to the cytoplasm. The protein localises to the cytoskeleton. In terms of biological role, binds to actin and affects the structure of the cytoskeleton. At high concentrations, profilin prevents the polymerization of actin, whereas it enhances it at low concentrations. This is Profilin-2 from Olea europaea (Common olive).